The following is a 289-amino-acid chain: MIVLLYVTSLAICASGQPRANQAKGESYSPRYICSIPGLPGPPGPPGANGSPGPHGRIGLPGRDGRDGRKGEKGEKGTAGLKGKTGPLGLAGEKGDQGETGKKGPIGPEGEKGEVGPAGPPGPKGDRGDQGDPGLPGVCRCGSIVLKSAFSVGITTSYPEERLPIIFNKVLFNEGEHYNPATGKFICAFPGIYYFSYDITLANKHLAIGLVHNGQYRIRTFDANTGNHDVASGSTVIYLQPEDEVWLEIFFNDQNGLFSDPGWADSLFSGFLLYVDTDYLDSISEDDEL.

Positions 1–16 are cleaved as a signal peptide; that stretch reads MIVLLYVTSLAICASG. The interval 36-134 is disordered; sequence IPGLPGPPGP…GDRGDQGDPG (99 aa). Residues 38-139 form the Collagen-like domain; it reads GLPGPPGPPG…QGDPGLPGVC (102 aa). A compositionally biased stretch (low complexity) spans 48-61; sequence ANGSPGPHGRIGLP. Over residues 63-76 the composition is skewed to basic and acidic residues; sequence RDGRDGRKGEKGEK. A compositionally biased stretch (low complexity) spans 78–91; the sequence is TAGLKGKTGPLGLA. A compositionally biased stretch (basic and acidic residues) spans 93–102; that stretch reads EKGDQGETGK. In terms of domain architecture, C1q spans 143–279; the sequence is SIVLKSAFSV…GFLLYVDTDY (137 aa).

Its subcellular location is the secreted. In Mus musculus (Mouse), this protein is Complement C1q tumor necrosis factor-related protein 7 (C1qtnf7).